The sequence spans 564 residues: Mitochondrial distribution and morphology protein 34 (564 aa).

The SMP-LTD domain maps to 1 to 208 (MAFNFNWSPL…VPEYRDRESE (208 aa)). 5 disordered regions span residues 208–240 (ESVN…NALN), 336–397 (SGGS…SAPT), 404–423 (QFSE…PQND), 434–517 (RISQ…DPRQ), and 532–564 (IQEE…AYGH). Residues 209 to 219 (SVNTLDQSSGP) show a composition bias toward polar residues. The span at 351 to 365 (SGRHPRPHGKKRKKR) shows a compositional bias: basic residues. Residues 366–376 (VVDLRRPKTTD) show a composition bias toward basic and acidic residues. Low complexity predominate over residues 380-390 (SVSGESVFSSE). Polar residues-rich tracts occupy residues 438-462 (GEHT…SRNS) and 477-503 (PRNS…SSAI).

Belongs to the MDM34 family. As to quaternary structure, component of the ER-mitochondria encounter structure (ERMES) or MDM complex, composed of mmm1, mdm10, mdm12 and mdm34.

The protein resides in the mitochondrion outer membrane. Component of the ERMES/MDM complex, which serves as a molecular tether to connect the endoplasmic reticulum (ER) and mitochondria. Components of this complex are involved in the control of mitochondrial shape and protein biogenesis, and function in nonvesicular lipid trafficking between the ER and mitochondria. Mdm34 is required for the interaction of the ER-resident membrane protein mmm1 and the outer mitochondrial membrane-resident beta-barrel protein mdm10. This chain is Mitochondrial distribution and morphology protein 34, found in Talaromyces stipitatus (strain ATCC 10500 / CBS 375.48 / QM 6759 / NRRL 1006) (Penicillium stipitatum).